The following is a 314-amino-acid chain: Fumarylacetoacetate hydrolase domain-containing protein 2 (314 aa).

Residues Glu159, Glu161, and Asp190 each coordinate a divalent metal cation. N6-acetyllysine; alternate is present on Lys203. Lys203 bears the N6-succinyllysine; alternate mark. Lys234 carries the N6-acetyllysine modification.

This sequence belongs to the FAH family. The cofactor is Ca(2+). Requires Mg(2+) as cofactor.

May have hydrolase activity. In Pongo abelii (Sumatran orangutan), this protein is Fumarylacetoacetate hydrolase domain-containing protein 2 (FAHD2).